Consider the following 155-residue polypeptide: 17.4 kDa class III heat shock protein (155 aa).

The sHSP domain occupies 35–155 (GRGSSNNIPI…KPKTVQIAVS (121 aa)).

It belongs to the small heat shock protein (HSP20) family. In terms of assembly, may form oligomeric structures.

It localises to the cytoplasm. This chain is 17.4 kDa class III heat shock protein (HSP17.4B), found in Arabidopsis thaliana (Mouse-ear cress).